Consider the following 280-residue polypeptide: Hemin import ATP-binding protein HmuV (280 aa).

Residues 26–260 form the ABC transporter domain; that stretch reads LAAAGGLRVH…GLLSEVYDQP (235 aa). 59-66 contributes to the ATP binding site; that stretch reads GPNGAGKS.

This sequence belongs to the ABC transporter superfamily. Heme (hemin) importer (TC 3.A.1.14.5) family. In terms of assembly, the complex is composed of two ATP-binding proteins (HmuV), two transmembrane proteins (HmuU) and a solute-binding protein (HmuT).

The protein resides in the cell membrane. Part of the ABC transporter complex HmuTUV involved in hemin import. Responsible for energy coupling to the transport system. This chain is Hemin import ATP-binding protein HmuV, found in Streptomyces coelicolor (strain ATCC BAA-471 / A3(2) / M145).